The sequence spans 174 residues: Thiol-disulfide oxidoreductase ResA (174 aa).

A helical; Signal-anchor for type II membrane protein transmembrane segment spans residues 11–30 (TVILLLLLAALGYTIYANFF). The region spanning 36-174 (VAVGSTAPDF…IKQHLESIKP (139 aa)) is the Thioredoxin domain. Residues C74 and C77 are joined by a disulfide bond.

This sequence belongs to the thioredoxin family. ResA subfamily.

It localises to the cell membrane. The protein operates within protein modification; cytochrome c assembly. Its function is as follows. Thiol-disulfide oxidoreductase which is required in disulfide reduction during c-type cytochrome synthesis. May accept reducing equivalents from CcdA, leading to breakage of disulfide bonds in apocytochrome c; following this reduction heme can be covalently attached. This chain is Thiol-disulfide oxidoreductase ResA, found in Geobacillus thermodenitrificans (strain NG80-2).